Reading from the N-terminus, the 155-residue chain is Ribosome maturation factor RimP (155 aa).

This sequence belongs to the RimP family.

It localises to the cytoplasm. Functionally, required for maturation of 30S ribosomal subunits. The chain is Ribosome maturation factor RimP from Listeria welshimeri serovar 6b (strain ATCC 35897 / DSM 20650 / CCUG 15529 / CIP 8149 / NCTC 11857 / SLCC 5334 / V8).